Here is a 65-residue protein sequence, read N- to C-terminus: Small ribosomal subunit protein eS17 (65 aa).

Belongs to the eukaryotic ribosomal protein eS17 family.

The chain is Small ribosomal subunit protein eS17 from Methanocella arvoryzae (strain DSM 22066 / NBRC 105507 / MRE50).